We begin with the raw amino-acid sequence, 744 residues long: Adenosylcobalamin-dependent ribonucleoside-triphosphate reductase (744 aa).

A disulfide bridge links Cys-120 with Cys-424. The effector region-1 stretch occupies residues 148-159 (SMPFSFLFDQLM). An effector region-2 region spans residues 169–318 (VNSNIKQIPK…ICNLIGKTVV (150 aa)). Residues Cys-413 and Glu-415 contribute to the active site. An adenosylcobalamin-binding-1 region spans residues 570-631 (FHYAGYLIQR…SKNFASAGTV (62 aa)). Positions 690 to 729 (LKQAPKEPINKKTYEERAALITDDVEEVFTKQNDDQKGLE) are adenosylcobalamin-binding-2.

This sequence belongs to the class II ribonucleoside-triphosphate reductase family. In terms of assembly, monomer. Requires adenosylcob(III)alamin as cofactor.

It catalyses the reaction a 2'-deoxyribonucleoside 5'-triphosphate + [thioredoxin]-disulfide + H2O = a ribonucleoside 5'-triphosphate + [thioredoxin]-dithiol. Allosterically regulated by ATP and dNTP. In Lactobacillus acidophilus (strain ATCC 700396 / NCK56 / N2 / NCFM), this protein is Adenosylcobalamin-dependent ribonucleoside-triphosphate reductase (rtpR).